The chain runs to 291 residues: ATP synthase gamma chain (291 aa).

Belongs to the ATPase gamma chain family. As to quaternary structure, F-type ATPases have 2 components, CF(1) - the catalytic core - and CF(0) - the membrane proton channel. CF(1) has five subunits: alpha(3), beta(3), gamma(1), delta(1), epsilon(1). CF(0) has three main subunits: a, b and c.

It is found in the cell inner membrane. Its function is as follows. Produces ATP from ADP in the presence of a proton gradient across the membrane. The gamma chain is believed to be important in regulating ATPase activity and the flow of protons through the CF(0) complex. This is ATP synthase gamma chain from Cupriavidus metallidurans (strain ATCC 43123 / DSM 2839 / NBRC 102507 / CH34) (Ralstonia metallidurans).